An 808-amino-acid chain; its full sequence is Phenylalanine--tRNA ligase beta subunit (808 aa).

Residues 40–157 enclose the tRNA-binding domain; it reads NKGATNVVVG…QSVEPGQDAL (118 aa). Residues 411-486 enclose the B5 domain; sequence RSERVIALDL…RLYGYDELPS (76 aa). Mg(2+) contacts are provided by Asp464, Asp470, Glu473, and Glu474. An FDX-ACB domain is found at 714–807; sequence PRYPAITRDM…VQKQTGAVLR (94 aa).

It belongs to the phenylalanyl-tRNA synthetase beta subunit family. Type 1 subfamily. As to quaternary structure, tetramer of two alpha and two beta subunits. Mg(2+) serves as cofactor.

The protein localises to the cytoplasm. It catalyses the reaction tRNA(Phe) + L-phenylalanine + ATP = L-phenylalanyl-tRNA(Phe) + AMP + diphosphate + H(+). This chain is Phenylalanine--tRNA ligase beta subunit, found in Shouchella clausii (strain KSM-K16) (Alkalihalobacillus clausii).